The following is a 332-amino-acid chain: Glycerol-3-phosphate dehydrogenase [NAD(P)+] (332 aa).

The NADPH site is built by serine 11, tryptophan 12, arginine 32, arginine 33, and lysine 106. Sn-glycerol 3-phosphate is bound by residues lysine 106 and glycine 136. Alanine 140 serves as a coordination point for NADPH. Sn-glycerol 3-phosphate contacts are provided by lysine 191, aspartate 244, serine 254, arginine 255, and asparagine 256. Catalysis depends on lysine 191, which acts as the Proton acceptor. Arginine 255 contacts NADPH. Positions 280 and 282 each coordinate NADPH.

It belongs to the NAD-dependent glycerol-3-phosphate dehydrogenase family.

The protein resides in the cytoplasm. The catalysed reaction is sn-glycerol 3-phosphate + NAD(+) = dihydroxyacetone phosphate + NADH + H(+). It catalyses the reaction sn-glycerol 3-phosphate + NADP(+) = dihydroxyacetone phosphate + NADPH + H(+). It participates in membrane lipid metabolism; glycerophospholipid metabolism. In terms of biological role, catalyzes the reduction of the glycolytic intermediate dihydroxyacetone phosphate (DHAP) to sn-glycerol 3-phosphate (G3P), the key precursor for phospholipid synthesis. In Corynebacterium aurimucosum (strain ATCC 700975 / DSM 44827 / CIP 107346 / CN-1) (Corynebacterium nigricans), this protein is Glycerol-3-phosphate dehydrogenase [NAD(P)+].